The primary structure comprises 287 residues: Putative sugar uptake protein M6_Spy1874 (287 aa).

Transmembrane regions (helical) follow at residues 4-26 (IFYALIPMFTWGSIGFVSNKIGG), 33-50 (LGMTFGALLFSLAVWLIV), 55-72 (TLQLWLFGILGGFIWSIG), 85-107 (VSVANPLSSGSQLVLGSLIGVLV), 117-134 (FVVGSLALLLLIIGFYFS), 154-171 (FRALTYSTIGYVMYAVLF), 181-200 (SVILPMAVGMVLGAITFMSF), 207-229 (YVIKNSVVGLLWGIGNIFMLLAA), 234-256 (LAIAFSFSQLGAIISIVGGILFL), and 268-285 (VVTGIICFIVGAILLGVV).

This sequence belongs to the GRP transporter (TC 2.A.7.5) family.

It localises to the cell membrane. The chain is Putative sugar uptake protein M6_Spy1874 from Streptococcus pyogenes serotype M6 (strain ATCC BAA-946 / MGAS10394).